The sequence spans 519 residues: uncharacterized protein (519 aa).

The next 11 helical transmembrane spans lie at 52–72 (IYFL…VRGS), 86–106 (LATY…SPIV), 119–139 (TWVV…SYNV), 156–176 (WSFL…GWSL), 199–219 (FFLS…NTFI), 231–251 (LSGY…LVCF), 313–333 (MLSL…VYTG), 343–363 (IWLK…ILVY), 374–394 (VFFP…IQFV), 408–430 (IGGT…PQYV), and 477–497 (TSIV…TPVV).

The protein localises to the membrane. This is an uncharacterized protein from Schizosaccharomyces pombe (strain 972 / ATCC 24843) (Fission yeast).